The sequence spans 463 residues: Ribosomal protein uS12 methylthiotransferase RimO (463 aa).

Residues 15–130 enclose the MTTase N-terminal domain; sequence PKVGMVSLGC…VMQAVHSHLP (116 aa). Cys-24, Cys-60, Cys-89, Cys-161, Cys-165, and Cys-168 together coordinate [4Fe-4S] cluster. In terms of domain architecture, Radical SAM core spans 147 to 392; it reads LTPRHYAYLK…MEVAEEVSAA (246 aa). The 69-residue stretch at 395–463 folds into the TRAM domain; sequence ARKIGKTLKV…ADGHDLWGEV (69 aa).

It belongs to the methylthiotransferase family. RimO subfamily. Requires [4Fe-4S] cluster as cofactor.

It is found in the cytoplasm. The catalysed reaction is L-aspartate(89)-[ribosomal protein uS12]-hydrogen + (sulfur carrier)-SH + AH2 + 2 S-adenosyl-L-methionine = 3-methylsulfanyl-L-aspartate(89)-[ribosomal protein uS12]-hydrogen + (sulfur carrier)-H + 5'-deoxyadenosine + L-methionine + A + S-adenosyl-L-homocysteine + 2 H(+). Its function is as follows. Catalyzes the methylthiolation of an aspartic acid residue of ribosomal protein uS12. The chain is Ribosomal protein uS12 methylthiotransferase RimO from Burkholderia mallei (strain NCTC 10229).